The primary structure comprises 84 residues: UPF0248 protein Pisl_1919 (84 aa).

Belongs to the UPF0248 family.

In Pyrobaculum islandicum (strain DSM 4184 / JCM 9189 / GEO3), this protein is UPF0248 protein Pisl_1919.